The chain runs to 892 residues: DNA ligase (892 aa).

Positions 1-23 are disordered; sequence MTMTNRDDSEQLAWDFDAPESDG. NAD(+) is bound by residues 99–103, 148–149, and Glu-182; these read DAAYD and SL. Lys-184 (N6-AMP-lysine intermediate) is an active-site residue. The NAD(+) site is built by Arg-205, Glu-244, Lys-369, and Lys-393. Residues Cys-490, Cys-493, Cys-509, and Cys-515 each coordinate Zn(2+). The BRCT domain maps to 810–892; sequence GLPQTLAGKT…KQLLDTGTVE (83 aa).

Belongs to the NAD-dependent DNA ligase family. LigA subfamily. The cofactor is Mg(2+). It depends on Mn(2+) as a cofactor.

The enzyme catalyses NAD(+) + (deoxyribonucleotide)n-3'-hydroxyl + 5'-phospho-(deoxyribonucleotide)m = (deoxyribonucleotide)n+m + AMP + beta-nicotinamide D-nucleotide.. Its function is as follows. DNA ligase that catalyzes the formation of phosphodiester linkages between 5'-phosphoryl and 3'-hydroxyl groups in double-stranded DNA using NAD as a coenzyme and as the energy source for the reaction. It is essential for DNA replication and repair of damaged DNA. In Bifidobacterium adolescentis (strain ATCC 15703 / DSM 20083 / NCTC 11814 / E194a), this protein is DNA ligase.